Reading from the N-terminus, the 303-residue chain is 4-diphosphocytidyl-2-C-methyl-D-erythritol kinase (303 aa).

K21 is a catalytic residue. 106–116 (PVAAGIGGGSA) is a binding site for ATP. D148 is an active-site residue.

Belongs to the GHMP kinase family. IspE subfamily.

The enzyme catalyses 4-CDP-2-C-methyl-D-erythritol + ATP = 4-CDP-2-C-methyl-D-erythritol 2-phosphate + ADP + H(+). Its pathway is isoprenoid biosynthesis; isopentenyl diphosphate biosynthesis via DXP pathway; isopentenyl diphosphate from 1-deoxy-D-xylulose 5-phosphate: step 3/6. Catalyzes the phosphorylation of the position 2 hydroxy group of 4-diphosphocytidyl-2C-methyl-D-erythritol. The sequence is that of 4-diphosphocytidyl-2-C-methyl-D-erythritol kinase from Nitrobacter hamburgensis (strain DSM 10229 / NCIMB 13809 / X14).